Here is a 3357-residue protein sequence, read N- to C-terminus: Versican core protein (3357 aa).

The signal sequence occupies residues 1-23; it reads MLINMKGILWMCSTLLLTHALHQ. The Ig-like V-type domain occupies 24–146; that stretch reads AKMETSPPVK…EDTQDTMSLA (123 aa). Cystine bridges form between Cys44–Cys130, Cys172–Cys243, Cys196–Cys217, Cys270–Cys333, and Cys294–Cys315. A glycan (N-linked (GlcNAc...) asparagine) is linked at Asn57. 2 Link domains span residues 150–245 and 251–347; these read VVFH…YCYV and DVFH…YCFK. 3 N-linked (GlcNAc...) asparagine glycosylation sites follow: Asn330, Asn351, and Asn441. The segment at 348–1308 is GAG-alpha (glucosaminoglycan attachment domain); the sequence is PKQNISEATT…IIEVRENKTG (961 aa). Over residues 625 to 634 the composition is skewed to basic and acidic residues; that stretch reads EPKTNGKVTE. The interval 625–646 is disordered; the sequence is EPKTNGKVTEDEFGQSQPTTTF. An O-linked (Xyl...) (chondroitin sulfate) serine glycan is attached at Ser660. Disordered regions lie at residues 801–863 and 881–908; these read WPGD…KPLE and TSTS…TTST. A glycan (N-linked (GlcNAc...) asparagine) is linked at Asn807. N-linked (GlcNAc...) asparagine glycosylation is found at Asn914 and Asn951. Disordered regions lie at residues 1010–1088 and 1252–1288; these read SPGA…YPPG and DHMT…PAAG. Polar residues-rich tracts occupy residues 1017-1042 and 1275-1286; these read TGVS…SSTA and SKTQELSTSTPA. Asn1305 and Asn1371 each carry an N-linked (GlcNAc...) asparagine glycan. A GAG-beta region spans residues 1309–3051; that stretch reads RLSDMIVSGH…VEGTAVYLPG (1743 aa). Residues 1396–1406 show a composition bias toward basic and acidic residues; it reads DPEAAEARRGQ. 2 disordered regions span residues 1396–1421 and 1458–1524; these read DPEA…DSSA and TYPE…AIEQ. Composition is skewed to polar residues over residues 1411 to 1421 and 1487 to 1498; these read APSQNFPDSSA and WSESITESSPNL. Residues Ser1517 and Ser1599 are each glycosylated (O-linked (Xyl...) (chondroitin sulfate) serine). Positions 1664 to 1705 are disordered; the sequence is LPSPDARPTTVWNSNSTSEWVSDKSFEGRKKKENEDEEGAVN. The segment covering 1673–1683 has biased composition (polar residues); that stretch reads TVWNSNSTSEW. A glycan (N-linked (GlcNAc...) asparagine) is linked at Asn1678. Residues 1684-1697 show a composition bias toward basic and acidic residues; the sequence is VSDKSFEGRKKKEN. O-linked (Xyl...) (chondroitin sulfate) serine glycosylation is found at Ser1907 and Ser1931. Residues 1926–1965 form a disordered region; it reads VGMGGSDDERVRDTQTSSSIPTTSDNIYPVPDSKGPDSTV. Residues 1939–1951 show a composition bias toward polar residues; that stretch reads TQTSSSIPTTSDN. Residue Asn2053 is glycosylated (N-linked (GlcNAc...) asparagine). 2 O-linked (Xyl...) (chondroitin sulfate) serine glycosylation sites follow: Ser2219 and Ser2226. Asn2243 carries N-linked (GlcNAc...) asparagine glycosylation. Over residues 2308–2322 the composition is skewed to polar residues; it reads TLSHTGTEEPTTSTL. 2 disordered regions span residues 2308–2374 and 2475–2494; these read TLSH…ATSP and YPTS…EGIE. A glycan (N-linked (GlcNAc...) asparagine) is linked at Asn2361. Residues 2475 to 2486 show a composition bias toward low complexity; the sequence is YPTSTLPSTEPY. Ser2585 and Ser2586 each carry phosphoserine. A glycan (N-linked (GlcNAc...) asparagine) is linked at Asn2626. Ser2696, Ser2697, and Ser2741 each carry an O-linked (Xyl...) (chondroitin sulfate) serine glycan. The segment at 2853–2908 is disordered; sequence LGGNVHRTEPPSMSRDPALDVSEDESKHKLLEELETSPTKPETSQDFPNKAKDHIP. Over residues 2888-2899 the composition is skewed to polar residues; that stretch reads TSPTKPETSQDF. Asn3029 is a glycosylation site (N-linked (GlcNAc...) asparagine). Positions 3051-3087 constitute an EGF-like 1 domain; sequence GPDLCKTNPCLNGGTCYPTETSYVCTCAPGYSGDQCE. Cystine bridges form between Cys3055/Cys3066, Cys3060/Cys3075, Cys3077/Cys3086, Cys3093/Cys3104, Cys3098/Cys3113, Cys3115/Cys3124, Cys3131/Cys3142, Cys3159/Cys3251, Cys3227/Cys3243, Cys3258/Cys3301, and Cys3287/Cys3314. In terms of domain architecture, EGF-like 2; calcium-binding spans 3089–3125; that stretch reads DFDECHSNPCRNGATCVDGFNTFRCLCLPSYVGALCE. The region spanning 3138–3252 is the C-type lectin domain; sequence FQGQCYKYFA…CNYHLTYTCK (115 aa). The region spanning 3256-3316 is the Sushi domain; it reads VACGQPPVVE…WAMPKITCMN (61 aa). N-linked (GlcNAc...) asparagine glycosylation is found at Asn3331 and Asn3341. Polar residues predominate over residues 3331-3342; sequence NSSSAKDNSINT. A disordered region spans residues 3331–3357; that stretch reads NSSSAKDNSINTSKHEHRWSRRQETRR.

Belongs to the aggrecan/versican proteoglycan family. Interacts with FBLN1. In terms of processing, phosphorylated by FAM20C in the extracellular medium. Proteolytically cleaved by ADAMTS5 and ADAMTS15 in the pericellular matrix surrounding myoblasts, facilitating myoblast contact and fusion which is required for skeletal muscle development and regeneration. As to expression, expressed in the retina (at protein level). Isoform V2: Only expressed in brain.

The protein localises to the secreted. The protein resides in the extracellular space. Its subcellular location is the extracellular matrix. It localises to the cell projection. It is found in the cilium. The protein localises to the photoreceptor outer segment. The protein resides in the interphotoreceptor matrix. Functionally, may play a role in intercellular signaling and in connecting cells with the extracellular matrix. May take part in the regulation of cell motility, growth and differentiation. Binds hyaluronic acid. In Mus musculus (Mouse), this protein is Versican core protein (Vcan).